A 247-amino-acid chain; its full sequence is Coproheme decarboxylase (247 aa).

Residues R129, 143-147 (YPMDK), H170, Q183, and S221 each bind Fe-coproporphyrin III. Y143 is an active-site residue.

It belongs to the ChdC family. Type 1 subfamily. The cofactor is Fe-coproporphyrin III.

It catalyses the reaction Fe-coproporphyrin III + 2 H2O2 + 2 H(+) = heme b + 2 CO2 + 4 H2O. It carries out the reaction Fe-coproporphyrin III + H2O2 + H(+) = harderoheme III + CO2 + 2 H2O. The catalysed reaction is harderoheme III + H2O2 + H(+) = heme b + CO2 + 2 H2O. It functions in the pathway porphyrin-containing compound metabolism; protoheme biosynthesis. Involved in coproporphyrin-dependent heme b biosynthesis. Catalyzes the decarboxylation of Fe-coproporphyrin III (coproheme) to heme b (protoheme IX), the last step of the pathway. The reaction occurs in a stepwise manner with a three-propionate intermediate. The polypeptide is Coproheme decarboxylase (Bacillus cereus (strain AH820)).